Reading from the N-terminus, the 535-residue chain is MFFVGVAVLAALQSVWGNGGLETNEVAGMDRLGVESQKENPPGILLRKDDGMCEARKPMDMSPGEVQTETKTVVKEIVVEIEEPREGIQEVLPVVQYEGQAKVSAGNDLLKPSCGVSSGFTSSAERCYVLTKDAHDGDTSKMISLVESLSGRVKRQYTKNITGVSFCSSHSDVLRKVDDAGMHVEEDKIYTVSMLQNNIPNYMYLMRHYENTIFNNYFYDNWIFRVLQIKRVMTKFLGSYEYYHTGKGVNIFLLDTAISSMDGACNLSGRLEACNAHGNVMAELLVGKTNGFAKDSRLSVLDVVDCDGKVALSEMIHGLEGLRESGGPSILVFGVSGPYSASLNSAVDRISSRGTVVVSPAGNSHDQSCNYSPGSSKSVINVGSVDKHAGISRFSNHGDCIRMFAPGEDVLQDSSLTGTSLSAAIVASSIALFLETSPRAAFPQIWGYLNQNSFWNSRGSYSVLKIPRLGCKGRIRGSIFRLGGLYEDIVPLVFVVLITSALLYLLLIGIRRFRRRREQELHDEDVLFDPPVDRF.

The first 17 residues, 1–17, serve as a signal peptide directing secretion; the sequence is MFFVGVAVLAALQSVWG. Residues 221-475 enclose the Peptidase S8 domain; sequence NWIFRVLQIK…IPRLGCKGRI (255 aa). Residues Asp255 and His277 each act as charge relay system in the active site. Residues Cys369 and Cys400 are joined by a disulfide bond. Residue Ser420 is the Charge relay system of the active site. A helical transmembrane segment spans residues 489-509; the sequence is IVPLVFVVLITSALLYLLLIG.

It belongs to the peptidase S8 family.

The protein localises to the membrane. In terms of biological role, may be involved in the degradation of proteins for nutrient acquisition or possess a regulatory function by proteolytic activation of proproteins. The protein is Putative subtilisin-like proteinase 2 (SPL2) of Encephalitozoon cuniculi (strain GB-M1) (Microsporidian parasite).